Consider the following 151-residue polypeptide: Protein NrdI (151 aa).

The protein belongs to the NrdI family.

Its function is as follows. Probably involved in ribonucleotide reductase function. The chain is Protein NrdI from Mesoplasma florum (strain ATCC 33453 / NBRC 100688 / NCTC 11704 / L1) (Acholeplasma florum).